Here is a 410-residue protein sequence, read N- to C-terminus: Elongation factor Tu, chloroplastic (410 aa).

Positions 10 to 214 constitute a tr-type G domain; the sequence is KPHINIGTIG…QVDKYIPTPQ (205 aa). Residues 19-26 form a G1 region; the sequence is GHVDHGKT. 19–26 lines the GTP pocket; that stretch reads GHVDHGKT. Thr26 provides a ligand contact to Mg(2+). The segment at 60–64 is G2; it reads GITIN. Positions 81 to 84 are G3; sequence DCPG. GTP contacts are provided by residues 81–85 and 136–139; these read DCPGH and NKED. Residues 136–139 form a G4 region; the sequence is NKED. The tract at residues 174 to 176 is G5; sequence SAL.

This sequence belongs to the TRAFAC class translation factor GTPase superfamily. Classic translation factor GTPase family. EF-Tu/EF-1A subfamily.

The protein resides in the plastid. It is found in the chloroplast. It carries out the reaction GTP + H2O = GDP + phosphate + H(+). GTP hydrolase that promotes the GTP-dependent binding of aminoacyl-tRNA to the A-site of ribosomes during protein biosynthesis. This chain is Elongation factor Tu, chloroplastic (tufA), found in Mesostigma viride (Green alga).